Consider the following 621-residue polypeptide: UvrABC system protein C (621 aa).

One can recognise a GIY-YIG domain in the interval 21 to 100; that stretch reads AEPGVYLMRD…IKTYQPPYNV (80 aa). The UVR domain maps to 210–245; that stretch reads DELIRELKEKMAQAAQQENYEAAARYRDQIRGLEQL.

The protein belongs to the UvrC family. As to quaternary structure, interacts with UvrB in an incision complex.

It localises to the cytoplasm. The UvrABC repair system catalyzes the recognition and processing of DNA lesions. UvrC both incises the 5' and 3' sides of the lesion. The N-terminal half is responsible for the 3' incision and the C-terminal half is responsible for the 5' incision. This is UvrABC system protein C from Synechococcus sp. (strain JA-3-3Ab) (Cyanobacteria bacterium Yellowstone A-Prime).